The following is a 582-amino-acid chain: Pre-hexon-linking protein IIIa (582 aa).

Residues 1 to 114 (MQRPAIIAER…ALLERVARYN (114 aa)) form a peripentonal hexon-tethering domain region. The interval 146–259 (GSLVALNAFL…FTNTNSLSRD (114 aa)) is binding to hexon-linking protein. Ser233 bears the Phosphoserine; by host mark. Phosphothreonine; by host is present on Thr282. The interval 437-479 (GKKEAGDEGPLLDSRASSPFPSLTSLPASVNSGRTTRPRLTGE) is disordered. Positions 451–471 (RASSPFPSLTSLPASVNSGRT) are enriched in polar residues. Phosphoserine; by host occurs at positions 458 and 465. Phosphotyrosine; by host is present on Tyr482. Phosphoserine; by host is present on Ser503. The span at 517–526 (ERREWEERQP) shows a compositional bias: basic and acidic residues. Residues 517–582 (ERREWEERQP…RPQGCIGSLY (66 aa)) are disordered. Positions 530–543 (RPPRQRWQRRKKGA) are enriched in basic residues. Residues 566–582 (GNPFAHLRPQGCIGSLY) constitute a propeptide that is removed on maturation.

It belongs to the adenoviridae hexon-linking protein IIIa family. Interacts with hexon proteins; this interaction tethers the peripentonal hexons to hexons situated in the facet. Interacts with the penton protein (via N-terminus). Interacts with packaging protein 3; this interaction is required to promote correct genome packaging. In terms of processing, cleaved near the C-terminus by the viral protease during virion maturation to form the mature protein.

Its subcellular location is the virion. The protein localises to the host nucleus. Structural component of the virion that acts as a cement protein on the capsid exterior which mediates the interactions between the hexons, including the peripentonal hexons, and reaches all the way to the penton vertices. Two hexon linking proteins IIIa, one from each facet, stabilize the unique edge interface between a pair of facets. As the virus enters the host cell, hexon linking proteins IIIa are shed concomitant with virion acidification in the endosome. During virus assembly, seems to play a role in the serotype specificity of the packaging of viral DNA via its interaction with packaging protein 3. The protein is Pre-hexon-linking protein IIIa of Human adenovirus A serotype 12 (HAdV-12).